A 418-amino-acid chain; its full sequence is MADIYEHQVPEKLRGKYQAMIVYCILGFGSLISWNSMLTTADYYYKVFPDYHPSRVLTLVYQPFAFGAIVILAYHESKTSTRKRNLIGYILYTISTFLLIVLDLATKGRGGFGPYTGLCAVVAAFGLADATVQGGMFGDLSLMCPELVQSYMGGMAVAGALTSALRLITKAAFEKSNNGLRKGAMMFLAISTCIELLSVMLYAYVLPKLPIVMYYRRKAASQGSKTVSADLAAAGIQNQSDLSDDDSKNQRLSKKELLFQNIDHAVNLFLIYVCTLSIFPGFLYENTGQHGLGAWYALVLVAMYNCWDLVGRYTPLVKWLNIENRKLITIAVLSRYLLIPAFYFTAKYGDQGWMIMLVSVLGLTNGHLTVCIMTIAPKGYKGPEQNALGNLLVIFLLGGIFAGVALDWLWLIGKKNAF.

11 consecutive transmembrane segments (helical) span residues 19-39, 56-76, 86-106, 112-132, 142-162, 186-206, 264-284, 291-311, 326-346, 353-373, and 392-412; these read AMIVYCILGFGSLISWNSMLT, VLTLVYQPFAFGAIVILAYHE, LIGYILYTISTFLLIVLDLAT, FGPYTGLCAVVAAFGLADATV, LMCPELVQSYMGGMAVAGALT, MFLAISTCIELLSVMLYAYVL, HAVNLFLIYVCTLSIFPGFLY, GLGAWYALVLVAMYNCWDLVG, KLITIAVLSRYLLIPAFYFTA, WMIMLVSVLGLTNGHLTVCIM, and LVIFLLGGIFAGVALDWLWLI.

This sequence belongs to the SLC29A/ENT transporter (TC 2.A.57) family. As to expression, expressed in leaves and siliques.

It localises to the cell membrane. Functionally, nucleoside transporter that can mediate uptake of adenosine, uridine, guanosine or cytidine when expressed in a heterologous system (yeast). The protein is Equilibrative nucleotide transporter 6 (ENT6) of Arabidopsis thaliana (Mouse-ear cress).